Here is a 308-residue protein sequence, read N- to C-terminus: Pseudouridine-5'-phosphate glycosidase (308 aa).

The active-site Proton donor is the Glu-25. Lys-86 and Val-106 together coordinate substrate. Asp-142 is a binding site for Mn(2+). 144-146 is a substrate binding site; sequence SAD. Lys-163 functions as the Nucleophile in the catalytic mechanism.

The protein belongs to the pseudouridine-5'-phosphate glycosidase family. In terms of assembly, homotrimer. The cofactor is Mn(2+).

The catalysed reaction is D-ribose 5-phosphate + uracil = psi-UMP + H2O. Catalyzes the reversible cleavage of pseudouridine 5'-phosphate (PsiMP) to ribose 5-phosphate and uracil. Functions biologically in the cleavage direction, as part of a pseudouridine degradation pathway. The chain is Pseudouridine-5'-phosphate glycosidase from Symbiobacterium thermophilum (strain DSM 24528 / JCM 14929 / IAM 14863 / T).